A 393-amino-acid polypeptide reads, in one-letter code: Thyrotropin-releasing hormone receptor (393 aa).

Topologically, residues 1-28 are extracellular; that stretch reads MENDTVSEMNQTELQPQAAVALEYQVVT. Residues Asn-3 and Asn-10 are each glycosylated (N-linked (GlcNAc...) asparagine). The chain crosses the membrane as a helical span at residues 29–51; the sequence is ILLVVIICGLGIVGNIMVVLVVM. Residues 52–61 lie on the Cytoplasmic side of the membrane; that stretch reads RTKHMRTPTN. Residues 62–83 form a helical membrane-spanning segment; sequence CYLVSLAVADLMVLVAAGLPNI. Over 84–99 the chain is Extracellular; that stretch reads TDSIYGSWVYGYVGCL. An intrachain disulfide couples Cys-98 to Cys-179. Residues 100 to 121 traverse the membrane as a helical segment; sequence CITYLQYLGINASSCSITAFTI. The Cytoplasmic portion of the chain corresponds to 122–144; sequence ERYIAICHPIKAQFLCTFSRAKK. A helical membrane pass occupies residues 145–168; that stretch reads IIIFVWAFTSIYCMLWFFLLDLNI. Residues 169 to 193 lie on the Extracellular side of the membrane; it reads STYKNAVVVSCGYKISRNYYSPIYL. Residues 194–215 form a helical membrane-spanning segment; the sequence is MDFGVFYVVPMILATVLYGFIA. Topologically, residues 216–266 are cytoplasmic; it reads RILFLNPIPSDPKENSKMWKNDSIHQNKNLNLNATNRCFNSTVSSRKQVTK. A helical membrane pass occupies residues 267-288; that stretch reads MLAVVVILFALLWMPYRTLVVV. The Extracellular portion of the chain corresponds to 289-296; it reads NSFLSSPF. A helical membrane pass occupies residues 297–319; the sequence is QENWFLLFCRICIYLNSAINPVI. Over 320–393 the chain is Cytoplasmic; it reads YNLMSQKFRA…FDDTCLASEN (74 aa).

The protein belongs to the G-protein coupled receptor 1 family.

The protein resides in the cell membrane. Its function is as follows. Receptor for thyrotropin-releasing hormone (TRH). Upon ligand binding, this G-protein-coupled receptor triggers activation of the phosphatidylinositol (IP3)-calcium-protein kinase C (PKC) pathway. The polypeptide is Thyrotropin-releasing hormone receptor (Trhr) (Mus musculus (Mouse)).